The sequence spans 110 residues: UPF0145 protein Blon_0093/BLIJ_0092 (110 aa).

This sequence belongs to the UPF0145 family.

The protein is UPF0145 protein Blon_0093/BLIJ_0092 of Bifidobacterium longum subsp. infantis (strain ATCC 15697 / DSM 20088 / JCM 1222 / NCTC 11817 / S12).